Reading from the N-terminus, the 301-residue chain is Protein FdhE homolog (301 aa).

Belongs to the FdhE family.

The protein resides in the cytoplasm. Necessary for formate dehydrogenase activity. The chain is Protein FdhE homolog from Erwinia tasmaniensis (strain DSM 17950 / CFBP 7177 / CIP 109463 / NCPPB 4357 / Et1/99).